The sequence spans 334 residues: Holliday junction branch migration complex subunit RuvB (334 aa).

Positions 1–182 are large ATPase domain (RuvB-L); it reads MNERMVDQSM…FGVHLRLEYY (182 aa). Residues Leu-21, Arg-22, Gly-63, Lys-66, Thr-67, Thr-68, 129–131, Arg-172, Tyr-182, and Arg-219 each bind ATP; that span reads EDF. Thr-67 is a binding site for Mg(2+). The tract at residues 183-253 is small ATPAse domain (RuvB-S); it reads NESDLKEIII…TTKHALGLLQ (71 aa). Residues 256–334 are head domain (RuvB-H); sequence QHGLDYIDHK…HFAKSNEERE (79 aa). Residues Arg-292, Arg-311, and Arg-316 each contribute to the DNA site.

This sequence belongs to the RuvB family. In terms of assembly, homohexamer. Forms an RuvA(8)-RuvB(12)-Holliday junction (HJ) complex. HJ DNA is sandwiched between 2 RuvA tetramers; dsDNA enters through RuvA and exits via RuvB. An RuvB hexamer assembles on each DNA strand where it exits the tetramer. Each RuvB hexamer is contacted by two RuvA subunits (via domain III) on 2 adjacent RuvB subunits; this complex drives branch migration. In the full resolvosome a probable DNA-RuvA(4)-RuvB(12)-RuvC(2) complex forms which resolves the HJ.

Its subcellular location is the cytoplasm. The catalysed reaction is ATP + H2O = ADP + phosphate + H(+). Functionally, the RuvA-RuvB-RuvC complex processes Holliday junction (HJ) DNA during genetic recombination and DNA repair, while the RuvA-RuvB complex plays an important role in the rescue of blocked DNA replication forks via replication fork reversal (RFR). RuvA specifically binds to HJ cruciform DNA, conferring on it an open structure. The RuvB hexamer acts as an ATP-dependent pump, pulling dsDNA into and through the RuvAB complex. RuvB forms 2 homohexamers on either side of HJ DNA bound by 1 or 2 RuvA tetramers; 4 subunits per hexamer contact DNA at a time. Coordinated motions by a converter formed by DNA-disengaged RuvB subunits stimulates ATP hydrolysis and nucleotide exchange. Immobilization of the converter enables RuvB to convert the ATP-contained energy into a lever motion, pulling 2 nucleotides of DNA out of the RuvA tetramer per ATP hydrolyzed, thus driving DNA branch migration. The RuvB motors rotate together with the DNA substrate, which together with the progressing nucleotide cycle form the mechanistic basis for DNA recombination by continuous HJ branch migration. Branch migration allows RuvC to scan DNA until it finds its consensus sequence, where it cleaves and resolves cruciform DNA. This is Holliday junction branch migration complex subunit RuvB from Staphylococcus aureus (strain bovine RF122 / ET3-1).